The chain runs to 301 residues: MKIGILSRNPELYSTRKLYEAAIIRGHQARIIDPLLCYMTIASQRPTIHYKGEELTGFDAIIPRIGASITFYGTAVVRQFEMMNIYSVNESVAISRSRDKLRSLQLLSRKGIGLPHTCFAHSTRYTKDLINQVGGAPLVVKLLEGTQGIGVVLAETQKAAESVIEAFKGLKEQILVQEFIEESGGADIRCLVVGGKVVAAMKRQGAEGEFRSNIHRGGKATVVRLTPEERATAVRSAHIMGLNVAGVDILQSNRGPIVMEVNSSPGLEGIETATGKDVADEIIRFIEKHTKPGRTKTRGKG.

One can recognise an ATP-grasp domain in the interval 104–287; that stretch reads LQLLSRKGIG…VADEIIRFIE (184 aa). ATP is bound by residues K141, 178-179, D187, and 211-213; these read EF and RSN. Positions 248, 260, and 262 each coordinate Mg(2+). Residues D248, E260, and N262 each coordinate Mn(2+).

The protein belongs to the RimK family. It depends on Mg(2+) as a cofactor. Mn(2+) serves as cofactor.

This chain is Probable alpha-L-glutamate ligase, found in Syntrophotalea carbinolica (strain DSM 2380 / NBRC 103641 / GraBd1) (Pelobacter carbinolicus).